The sequence spans 723 residues: Peroxisomal bifunctional enzyme (723 aa).

An enoyl-CoA hydratase / isomerase region spans residues 1 to 282 (MAEYTRLHNA…FAERKANKWS (282 aa)). Residue K38 is modified to N6-succinyllysine. G101 lines the substrate pocket. K165 is modified (N6-acetyllysine; alternate). K165 bears the N6-succinyllysine; alternate mark. K171 carries the N6-acetyllysine modification. Residue K219 is modified to N6-acetyllysine; alternate. N6-succinyllysine; alternate is present on K219. Residue K250 is modified to N6-acetyllysine. N6-succinyllysine is present on residues K280 and K290. The interval 283 to 572 (TPSGASWKTA…DVLCELGRFG (290 aa)) is 3-hydroxyacyl-CoA dehydrogenase. K346, K350, and K464 each carry N6-acetyllysine. An N6-succinyllysine modification is found at K532. Phosphothreonine is present on T548. K577 is modified (N6-succinyllysine). K584, K591, and K710 each carry N6-acetyllysine; alternate. An N6-succinyllysine; alternate mark is found at K584, K591, and K710. A Phosphoserine modification is found at S718. Residues 721-723 (SKL) carry the Microbody targeting signal motif. K722 bears the N6-succinyllysine mark.

This sequence in the N-terminal section; belongs to the enoyl-CoA hydratase/isomerase family. It in the C-terminal section; belongs to the 3-hydroxyacyl-CoA dehydrogenase family. In terms of assembly, monomer. Acetylated, leading to enhanced enzyme activity. Acetylation is enhanced by up to 80% after treatment either with trichostin A (TSA) or with nicotinamide (NAM) with highest increase on Lys-346. Acetylation and enzyme activity increased by about 1.5% on addition of fatty acids. Liver and kidney. Strongly expressed in the terminal segments of the proximal tubule. Lower amounts seen in the brain.

It is found in the peroxisome. The catalysed reaction is a (3S)-3-hydroxyacyl-CoA = a (2E)-enoyl-CoA + H2O. The enzyme catalyses a 4-saturated-(3S)-3-hydroxyacyl-CoA = a (3E)-enoyl-CoA + H2O. It catalyses the reaction a (3Z)-enoyl-CoA = a 4-saturated (2E)-enoyl-CoA. It carries out the reaction a (3E)-enoyl-CoA = a 4-saturated (2E)-enoyl-CoA. The catalysed reaction is a (3S)-3-hydroxyacyl-CoA + NAD(+) = a 3-oxoacyl-CoA + NADH + H(+). The enzyme catalyses (2S,3S)-3-hydroxy-2-methylbutanoyl-CoA = (2E)-2-methylbut-2-enoyl-CoA + H2O. It catalyses the reaction (3S)-hydroxyhexadecanoyl-CoA + NAD(+) = 3-oxohexadecanoyl-CoA + NADH + H(+). It carries out the reaction (3S)-hydroxyhexadecanoyl-CoA = (2E)-hexadecenoyl-CoA + H2O. The catalysed reaction is (2E)-hexadecenedioyl-CoA + H2O = (3S)-hydroxyhexadecanedioyl-CoA. The enzyme catalyses (3S)-hydroxyhexadecanedioyl-CoA + NAD(+) = 3-oxohexadecanedioyl-CoA + NADH + H(+). It catalyses the reaction (3E,5Z)-tetradecadienoyl-CoA = (2E,5Z)-tetradecadienoyl-CoA. It carries out the reaction (3E,5Z)-octadienoyl-CoA = (2E,5Z)-octadienoyl-CoA. The catalysed reaction is (3S)-hydroxydecanoyl-CoA + NAD(+) = 3-oxodecanoyl-CoA + NADH + H(+). The enzyme catalyses (3E)-decenoyl-CoA = (2E)-decenoyl-CoA. It catalyses the reaction (3Z)-hexenoyl-CoA = (2E)-hexenoyl-CoA. It carries out the reaction (3E)-hexenoyl-CoA = (2E)-hexenoyl-CoA. The catalysed reaction is (3S)-hydroxydecanoyl-CoA = (2E)-decenoyl-CoA + H2O. The enzyme catalyses (3S)-hydroxyhexanoyl-CoA = (2E)-hexenoyl-CoA + H2O. It functions in the pathway lipid metabolism; fatty acid beta-oxidation. With respect to regulation, enzyme activity enhanced by acetylation. Functionally, peroxisomal trifunctional enzyme possessing 2-enoyl-CoA hydratase, 3-hydroxyacyl-CoA dehydrogenase, and delta 3, delta 2-enoyl-CoA isomerase activities. Catalyzes two of the four reactions of the long chain fatty acids peroxisomal beta-oxidation pathway. Can also use branched-chain fatty acids such as 2-methyl-2E-butenoyl-CoA as a substrate, which is hydrated into (2S,3S)-3-hydroxy-2-methylbutanoyl-CoA. Optimal isomerase for 2,5 double bonds into 3,5 form isomerization in a range of enoyl-CoA species. Also able to isomerize both 3-cis and 3-trans double bonds into the 2-trans form in a range of enoyl-CoA species. With HSD17B4, catalyzes the hydration of trans-2-enoyl-CoA and the dehydrogenation of 3-hydroxyacyl-CoA, but with opposite chiral specificity. Regulates the amount of medium-chain dicarboxylic fatty acids which are essential regulators of all fatty acid oxidation pathways. Also involved in the degradation of long-chain dicarboxylic acids through peroxisomal beta-oxidation. In Homo sapiens (Human), this protein is Peroxisomal bifunctional enzyme.